Here is a 107-residue protein sequence, read N- to C-terminus: Putative double-stranded DNA mimic protein Asuc_1259 (107 aa).

It belongs to the putative dsDNA mimic protein family.

Its function is as follows. May act as a double-stranded DNA (dsDNA) mimic. Probably regulates the activity of a dsDNA-binding protein. The protein is Putative double-stranded DNA mimic protein Asuc_1259 of Actinobacillus succinogenes (strain ATCC 55618 / DSM 22257 / CCUG 43843 / 130Z).